A 429-amino-acid polypeptide reads, in one-letter code: MGTIKQIKAREILDSRGNPTVEADVILDSGVMGRAAVPSGASTGTREAVELRDGDAGRYLGKGVRKAVENVNTVIADALCGMDASGQRALDDRMRELDGTDNKGKLGANALLAVSLAAARATAAERGQSLFRYLNPEGPWSLPVPMMNILNGGEHADNSVDIQEFMVMPTGFDRFSEALRCGTEIFHALKKVLQDRGLNTGVGDEGGFAPDLPSNEAALEVILEAIDRAGYKAGENVWLALDAASSEFYQDGVYRLASEGREFSAEAFADYLADLCARYPILSIEDGMDESDWVGWKALTDKLGDRVQLVGDDLFVTNTRILKRGIDEGVGNSILIKFNQIGTLSETLDAIAMAHEAGFTSVVSHRSGETEDTTIADLAVATTATQIKTGSLSRSDRVAKYNQLLRIEEELGEQADYPGLAAFPQLRRG.

Gln163 provides a ligand contact to (2R)-2-phosphoglycerate. Glu205 acts as the Proton donor in catalysis. Residues Asp242, Glu285, and Asp312 each contribute to the Mg(2+) site. (2R)-2-phosphoglycerate contacts are provided by Lys337, Arg366, Ser367, and Lys388. Catalysis depends on Lys337, which acts as the Proton acceptor.

The protein belongs to the enolase family. In terms of assembly, component of the RNA degradosome, a multiprotein complex involved in RNA processing and mRNA degradation. Mg(2+) serves as cofactor.

It localises to the cytoplasm. Its subcellular location is the secreted. The protein resides in the cell surface. The catalysed reaction is (2R)-2-phosphoglycerate = phosphoenolpyruvate + H2O. It participates in carbohydrate degradation; glycolysis; pyruvate from D-glyceraldehyde 3-phosphate: step 4/5. Catalyzes the reversible conversion of 2-phosphoglycerate (2-PG) into phosphoenolpyruvate (PEP). It is essential for the degradation of carbohydrates via glycolysis. The chain is Enolase from Alkalilimnicola ehrlichii (strain ATCC BAA-1101 / DSM 17681 / MLHE-1).